A 346-amino-acid chain; its full sequence is Methylthioribose-1-phosphate isomerase (346 aa).

Substrate-binding positions include 48 to 50 (RGA), arginine 91, and glutamine 196. The active-site Proton donor is the aspartate 237. Position 247-248 (247-248 (NK)) interacts with substrate.

It belongs to the eIF-2B alpha/beta/delta subunits family. MtnA subfamily.

It catalyses the reaction 5-(methylsulfanyl)-alpha-D-ribose 1-phosphate = 5-(methylsulfanyl)-D-ribulose 1-phosphate. It participates in amino-acid biosynthesis; L-methionine biosynthesis via salvage pathway; L-methionine from S-methyl-5-thio-alpha-D-ribose 1-phosphate: step 1/6. In terms of biological role, catalyzes the interconversion of methylthioribose-1-phosphate (MTR-1-P) into methylthioribulose-1-phosphate (MTRu-1-P). In Thermosipho africanus (strain TCF52B), this protein is Methylthioribose-1-phosphate isomerase.